The following is an 849-amino-acid chain: MADSDDEYDRRRRDKFRRERSDYDRSREREERRRDDWSDREWDRGRERRSRGEYRDYESRSRRERFSPQRHDLSPPQKRMRRDWDDHGSDPYHSGYDLPYSSSAGGPGYGPPQPWGHPEMHVLQHHGIPIQARLGNLHQVDLGTPAPIMKTFKEFLLSLEDTVDETEAVKRYNDYKIDFRRQQMQEFFLAHKDEEWFRSKYHPDEVGKHKQESQASLRNRLSAFMFLMEKSWLNEVQLDIAQSPAIIKVLDAAVIKMEGGTEIDLKILDEEEEEAKREAAKKEEAPVTETEKVVTEEKEAPAKPENDKEDESEEKPVKPQEEEEKKVEKKVEKEEPERETRKPGTRKRKRSGESDDGSDSESDTETASPKPKAETPNQNGRAEETPKKEEDTEKQKEKQKEDTVKPRPLHKTCSIFMRNIPPNISKAEITALCKRYPGFMRVALSEPQPERRFLRKAYVTFDRSVNIKEICWSVQNIRLRECELSPGVNRDLTYRVRNINGITLHRPIVRNDIKLAARLIHALDERAVLWEGEQMVLAQNPILKNITDYLIDEVNAEEEELLFSAGRTPETELPKDGNPTEISVERDDKLIKVLDKLLFYLRIVHSVDYYNTCEYPNEDEMPTRCGMMHVRGPLPPNRVSHGEVAEWQKTFEEKLAPLFAVRETLSEEESIKMGKKDPEQEVEKFVAANTQELGKEKWLCPLSGKKFKGPEFVRKHIFNKHAEKIEEVKKEVVFFNNYLIDSKRPALLEVKPLQPPVGAAGQALAAGLLYPHQGPPALLPYAQPRPPVLGYGGAPQFPPNPYGAGRGNYDAFRGQGMYPGKPRNRMMRGDPRSIIEYRDLDAPDDVDFF.

Disordered stretches follow at residues 1–90 (MADS…HGSD) and 276–409 (KREA…PRPL). Composition is skewed to basic and acidic residues over residues 8–73 (YDRR…RHDL), 276–306 (KREA…KPEN), and 314–342 (EKPV…ETRK). The span at 354-364 (SDDGSDSESDT) shows a compositional bias: acidic residues. Positions 381 to 405 (RAEETPKKEEDTEKQKEKQKEDTVK) are enriched in basic and acidic residues.

This sequence belongs to the ARS2 family. In terms of assembly, interacts ncbp1/cbp80.

It localises to the nucleus. It is found in the nucleoplasm. The protein resides in the cytoplasm. Acts as a mediator between the cap-binding complex (CBC) and the primary microRNAs (miRNAs) processing machinery during cell proliferation. Contributes to the stability and delivery of capped primary miRNA transcripts to the primary miRNA processing complex, thereby playing a role in RNA-mediated gene silencing (RNAi) by miRNAs. This Xenopus laevis (African clawed frog) protein is Serrate RNA effector molecule homolog A (srrt-a).